Here is a 312-residue protein sequence, read N- to C-terminus: Ribosomal protein L11 methyltransferase (312 aa).

The S-adenosyl-L-methionine site is built by Thr-162, Gly-183, Asp-205, and Asn-248.

The protein belongs to the methyltransferase superfamily. PrmA family.

The protein resides in the cytoplasm. The enzyme catalyses L-lysyl-[protein] + 3 S-adenosyl-L-methionine = N(6),N(6),N(6)-trimethyl-L-lysyl-[protein] + 3 S-adenosyl-L-homocysteine + 3 H(+). Its function is as follows. Methylates ribosomal protein L11. The protein is Ribosomal protein L11 methyltransferase of Bacillus cereus (strain Q1).